A 211-amino-acid chain; its full sequence is Thiamine-phosphate synthase (211 aa).

4-amino-2-methyl-5-(diphosphooxymethyl)pyrimidine is bound by residues Gln37–Lys41 and Asn69. Positions 70 and 89 each coordinate Mg(2+). Ser108 lines the 4-amino-2-methyl-5-(diphosphooxymethyl)pyrimidine pocket. 2-[(2R,5Z)-2-carboxy-4-methylthiazol-5(2H)-ylidene]ethyl phosphate is bound at residue Thr134–Thr136. 4-amino-2-methyl-5-(diphosphooxymethyl)pyrimidine is bound at residue Lys137. 2-[(2R,5Z)-2-carboxy-4-methylthiazol-5(2H)-ylidene]ethyl phosphate is bound by residues Gly166 and Val186–Ser187.

This sequence belongs to the thiamine-phosphate synthase family. Requires Mg(2+) as cofactor.

It catalyses the reaction 2-[(2R,5Z)-2-carboxy-4-methylthiazol-5(2H)-ylidene]ethyl phosphate + 4-amino-2-methyl-5-(diphosphooxymethyl)pyrimidine + 2 H(+) = thiamine phosphate + CO2 + diphosphate. The enzyme catalyses 2-(2-carboxy-4-methylthiazol-5-yl)ethyl phosphate + 4-amino-2-methyl-5-(diphosphooxymethyl)pyrimidine + 2 H(+) = thiamine phosphate + CO2 + diphosphate. The catalysed reaction is 4-methyl-5-(2-phosphooxyethyl)-thiazole + 4-amino-2-methyl-5-(diphosphooxymethyl)pyrimidine + H(+) = thiamine phosphate + diphosphate. The protein operates within cofactor biosynthesis; thiamine diphosphate biosynthesis; thiamine phosphate from 4-amino-2-methyl-5-diphosphomethylpyrimidine and 4-methyl-5-(2-phosphoethyl)-thiazole: step 1/1. Its function is as follows. Condenses 4-methyl-5-(beta-hydroxyethyl)thiazole monophosphate (THZ-P) and 2-methyl-4-amino-5-hydroxymethyl pyrimidine pyrophosphate (HMP-PP) to form thiamine monophosphate (TMP). The sequence is that of Thiamine-phosphate synthase from Salmonella typhimurium (strain LT2 / SGSC1412 / ATCC 700720).